A 904-amino-acid chain; its full sequence is UPF0182 protein CKL_0015 (904 aa).

7 helical membrane passes run Ser9 to Ile29, Leu47 to Leu67, Ile96 to Tyr116, Ile157 to Val177, Leu208 to Ile228, Tyr253 to Val273, and Ile279 to Val299.

It belongs to the UPF0182 family.

It is found in the cell membrane. This Clostridium kluyveri (strain ATCC 8527 / DSM 555 / NBRC 12016 / NCIMB 10680 / K1) protein is UPF0182 protein CKL_0015.